The following is a 1227-amino-acid chain: Multifunctional 2-oxoglutarate metabolism enzyme (1227 aa).

A 2-oxoglutarate dehydrogenase E1, N-terminal part region spans residues 1–41 (MSSSPSPFGQNEWLVEEMYRKFRDDPSSVDPSWHEFLVDYS). Over residues 23-37 (RDDPSSVDPSWHEFL) the composition is skewed to basic and acidic residues. The interval 23–102 (RDDPSSVDPS…SATPAKGDES (80 aa)) is disordered. Residues 42–88 (PEPTTDSASNGRTTTAAPVTPPTPAPAPAPEPKAAPKPAAKTEAKPA) are linker. Positions 43–53 (EPTTDSASNGR) are enriched in polar residues. Positions 60 to 76 (VTPPTPAPAPAPEPKAA) are enriched in pro residues. The span at 88–97 (AKPAKSATPA) shows a compositional bias: low complexity. Residues 89–335 (KPAKSATPAK…LRTIHQLLLD (247 aa)) are succinyltransferase E2. Catalysis depends on H314, which acts as the Proton acceptor; for succinyltransferase activity. Residues 336-1227 (DDFFDEIFRE…QQEILDTAFG (892 aa)) are 2-oxoglutarate dehydrogenase E1, C-terminal part. Residue R540 participates in thiamine diphosphate binding. 2-oxoglutarate contacts are provided by H579 and S604. Thiamine diphosphate is bound by residues S604, L606, D645, A646, A647, and N678. Mg(2+) is bound at residue D645. Mg(2+) is bound by residues N678 and I680. Residues 783–814 (DISMKEAEDALRDYQGQLERVFNEVRELEKHE) are a coiled coil. Residue H1020 coordinates 2-oxoglutarate. Acetyl-CoA contacts are provided by T1038, R1054, K1089, S1092, Q1142, R1149, and R1150.

This sequence belongs to the 2-oxoacid dehydrogenase family. Kgd subfamily. Homodimer. Interacts with the FHA domain of unphosphorylated GarA. The 2-oxoglutarate dehydrogenase (ODH) complex contains multiple copies of three enzymatic components: 2-oxoglutarate dehydrogenase (E1), dihydrolipoamide succinyltransferase (E2) and lipoamide dehydrogenase (E3). It depends on Mg(2+) as a cofactor. The cofactor is thiamine diphosphate.

It catalyses the reaction glyoxylate + 2-oxoglutarate + H(+) = 2-hydroxy-3-oxoadipate + CO2. The catalysed reaction is 2-oxoglutarate + H(+) = succinate semialdehyde + CO2. The enzyme catalyses N(6)-[(R)-lipoyl]-L-lysyl-[protein] + 2-oxoglutarate + H(+) = N(6)-[(R)-S(8)-succinyldihydrolipoyl]-L-lysyl-[protein] + CO2. It carries out the reaction N(6)-[(R)-dihydrolipoyl]-L-lysyl-[protein] + succinyl-CoA = N(6)-[(R)-S(8)-succinyldihydrolipoyl]-L-lysyl-[protein] + CoA. Its pathway is carbohydrate metabolism; tricarboxylic acid cycle; succinate from 2-oxoglutarate (transferase route): step 1/2. The protein operates within carbohydrate metabolism; tricarboxylic acid cycle; succinyl-CoA from 2-oxoglutarate (dehydrogenase route): step 1/1. With respect to regulation, alpha-ketoglutarate dehydrogenase and decarboxylase activities are inhibited by unphosphorylated GarA, and allosterically activated by acetyl-CoA, the main substrate of the TCA cycle. Both the phosphoadenosine and acetyl moieties of acetyl-CoA are important for activation because neither CoA nor the synthetic compound S-(2-acetamidoethyl)-ethanethioate (which mimics the terminal acetyl-phosphopantetheine group of acetyl-CoA) has an activation effect. Its function is as follows. Shows three enzymatic activities that share a first common step, the attack of thiamine-PP on 2-oxoglutarate (alpha-ketoglutarate, KG), leading to the formation of an enamine-thiamine-PP intermediate upon decarboxylation. Thus, displays KGD activity, catalyzing the decarboxylation from five-carbon 2-oxoglutarate to four-carbon succinate semialdehyde (SSA). Also catalyzes C-C bond formation between the activated aldehyde formed after decarboxylation of alpha-ketoglutarate and the carbonyl of glyoxylate (GLX), to yield 2-hydroxy-3-oxoadipate (HOA), which spontaneously decarboxylates to form 5-hydroxylevulinate (HLA). And is also a component of the 2-oxoglutarate dehydrogenase (ODH) complex, that catalyzes the overall conversion of 2-oxoglutarate to succinyl-CoA and CO(2). The KG decarboxylase and KG dehydrogenase reactions provide two alternative, tightly regulated, pathways connecting the oxidative and reductive branches of the TCA cycle. The sequence is that of Multifunctional 2-oxoglutarate metabolism enzyme (kgd) from Mycolicibacterium smegmatis (strain ATCC 700084 / mc(2)155) (Mycobacterium smegmatis).